We begin with the raw amino-acid sequence, 312 residues long: Pre-mRNA-splicing factor 38A (312 aa).

An N-terminal protein interaction domain region spans residues 1-179 (MANRTVKDAH…VLEETEQLDP (179 aa)). Positions 180–312 (RVSALEEDMD…SHKKSRRGNE (133 aa)) are disordered. The segment covering 184–201 (LEEDMDDVESSEEEEDED) has biased composition (acidic residues). Over residues 202-223 (EKGRDPSPEHHRRNYRDLDRPR) the composition is skewed to basic and acidic residues. 2 stretches are compositionally biased toward basic residues: residues 224–294 (RSPS…RSHS) and 301–312 (KKSHKKSRRGNE).

It belongs to the PRP38 family. As to quaternary structure, component of the spliceosome B complex.

Its subcellular location is the nucleus. In terms of biological role, involved in pre-mRNA splicing as a component of the spliceosome. This Xenopus tropicalis (Western clawed frog) protein is Pre-mRNA-splicing factor 38A (prpf38a).